The primary structure comprises 199 residues: Outer dense fiber protein 4 (199 aa).

Residues 1–14 show a composition bias toward basic and acidic residues; that stretch reads MNIRSLERAGRAGK. The tract at residues 1-25 is disordered; sequence MNIRSLERAGRAGKQDGVAVSPGQE. Ser53 is subject to Phosphoserine. 3 consecutive transmembrane segments (helical) span residues 68 to 88, 109 to 128, and 159 to 179; these read IAQV…VVMV, VTTK…LHIY, and LALG…IPGL.

The protein resides in the membrane. Functionally, component of the outer dense fibers (ODF) of spermatozoa which could be involved in sperm tail structure, sperm movement and general organization of cellular cytoskeleton. This chain is Outer dense fiber protein 4 (ODF4), found in Bos taurus (Bovine).